A 487-amino-acid polypeptide reads, in one-letter code: Cytochrome P450 2C16 (487 aa).

C432 contacts heme.

Belongs to the cytochrome P450 family. Requires heme as cofactor. In terms of tissue distribution, expressed constitutively in liver, lung, testes, and kidney.

It localises to the endoplasmic reticulum membrane. The protein localises to the microsome membrane. The enzyme catalyses an organic molecule + reduced [NADPH--hemoprotein reductase] + O2 = an alcohol + oxidized [NADPH--hemoprotein reductase] + H2O + H(+). In terms of biological role, cytochromes P450 are a group of heme-thiolate monooxygenases. In liver microsomes, this enzyme is involved in an NADPH-dependent electron transport pathway. It oxidizes a variety of structurally unrelated compounds, including steroids, fatty acids, and xenobiotics. In Oryctolagus cuniculus (Rabbit), this protein is Cytochrome P450 2C16 (CYP2C16).